The sequence spans 150 residues: UPF0178 protein Shew_2726 (150 aa).

Belongs to the UPF0178 family.

The protein is UPF0178 protein Shew_2726 of Shewanella loihica (strain ATCC BAA-1088 / PV-4).